Here is a 474-residue protein sequence, read N- to C-terminus: Variant surface glycoprotein MITAT 1.5 (474 aa).

Positions 1–22 are cleaved as a signal peptide; that stretch reads MIHSNKVATVVLALISSWPADG. Cystine bridges form between cysteine 37–cysteine 161 and cysteine 144–cysteine 214. 2 N-linked (GlcNAc...) asparagine glycosylation sites follow: asparagine 74 and asparagine 95. N-linked (GlcNAc...) asparagine glycosylation occurs at asparagine 329. The interval 388–449 is disordered; sequence AKDGEGQKNQ…ETDEPDKEKC (62 aa). Composition is skewed to basic and acidic residues over residues 414–423 and 435–449; these read TNKEACEKEN and KGKDGETDEPDKEKC. Asparagine 451 carries the GPI-anchor amidated asparagine lipid modification. A propeptide spans 452–474 (removed in mature form); it reads GSFLTSKQFAFSVVSAAFMALLF.

It localises to the cell membrane. In terms of biological role, VSG forms a coat on the surface of the parasite. The trypanosome evades the immune response of the host by expressing a series of antigenically distinct VSGs from an estimated 1000 VSG genes. The chain is Variant surface glycoprotein MITAT 1.5 from Trypanosoma brucei brucei.